We begin with the raw amino-acid sequence, 142 residues long: Holo-[acyl-carrier-protein] synthase (142 aa).

Asp-9 and Glu-63 together coordinate Mg(2+).

Belongs to the P-Pant transferase superfamily. AcpS family. The cofactor is Mg(2+).

It is found in the cytoplasm. It catalyses the reaction apo-[ACP] + CoA = holo-[ACP] + adenosine 3',5'-bisphosphate + H(+). In terms of biological role, transfers the 4'-phosphopantetheine moiety from coenzyme A to a Ser of acyl-carrier-protein. In Burkholderia lata (strain ATCC 17760 / DSM 23089 / LMG 22485 / NCIMB 9086 / R18194 / 383), this protein is Holo-[acyl-carrier-protein] synthase.